Consider the following 139-residue polypeptide: Basic phospholipase A2 beta-bungarotoxin A2 chain (139 aa).

The signal sequence occupies residues 1–9 (AVCVSLLGA). A propeptide spanning residues 10–17 (ANIPPHPF) is cleaved from the precursor. Residues Tyr-45, Gly-47, and Gly-49 each coordinate Ca(2+). Cys-46 and Cys-62 form a disulfide bridge. His-65 is a catalytic residue. Asp-66 is a binding site for Ca(2+).

Belongs to the phospholipase A2 family. Group I subfamily. D49 sub-subfamily. As to quaternary structure, heterodimer; disulfide-linked. The A chains have phospholipase A2 activity and the B chains show homology with the basic protease inhibitors. Requires Ca(2+) as cofactor. As to expression, expressed by the venom gland.

The protein resides in the secreted. It catalyses the reaction a 1,2-diacyl-sn-glycero-3-phosphocholine + H2O = a 1-acyl-sn-glycero-3-phosphocholine + a fatty acid + H(+). Snake venom phospholipase A2 (PLA2) that shows presynaptic neurotoxicity. PLA2 catalyzes the calcium-dependent hydrolysis of the 2-acyl groups in 3-sn-phosphoglycerides. This is Basic phospholipase A2 beta-bungarotoxin A2 chain from Bungarus candidus (Malayan krait).